The chain runs to 323 residues: Nucleotide-binding protein ZMO1325 (323 aa).

An ATP-binding site is contributed by 25–32 (GLSGAGKS). GTP is bound at residue 78–81 (DSRT).

The protein belongs to the RapZ-like family.

Displays ATPase and GTPase activities. The chain is Nucleotide-binding protein ZMO1325 from Zymomonas mobilis subsp. mobilis (strain ATCC 31821 / ZM4 / CP4).